Reading from the N-terminus, the 247-residue chain is MSAPDSPALAGMSIGAVLDLLRPDFPDVTISKIRFLEAEGLVTPRRASSGYRRFTAYDCARLRFILTAQRDHYLPLKVIRAQLDAQPDGELPPFGSPYVLPRLVPVAGDSAGGVGSDTASVSLTGIRLSREDLLERSEVADELLTALLKAGVITTGPGGFFDEHAVVILQCARALAEYGVEPRHLRAFRSAADRQSDLIAQIAGPLVKAGKAGARDRADDLAREVAALAITLHTSLIKSAVRDVLHR.

Residues 11-85 (GMSIGAVLDL…LKVIRAQLDA (75 aa)) enclose the HTH merR-type domain. Positions 14 to 38 (IGAVLDLLRPDFPDVTISKIRFLEA) form a DNA-binding region, H-T-H motif.

Homodimer.

Its function is as follows. Transcriptional regulator that binds to its own promoter and thus may play a role in the regulation of the cotranscribed genes Rv1827 and Rv1828. Can also bind several promoter regions of genes that are essential, including ftsZ. Binds to the imperfect everted repeat sequence CTCAA through its winged-HTH motif. This is an uncharacterized protein from Mycobacterium tuberculosis (strain ATCC 25618 / H37Rv).